The sequence spans 295 residues: Aspartate carbamoyltransferase catalytic subunit (295 aa).

Residues arginine 49 and threonine 50 each coordinate carbamoyl phosphate. Lysine 77 is a binding site for L-aspartate. Carbamoyl phosphate is bound by residues arginine 99, histidine 127, and glutamine 130. The L-aspartate site is built by arginine 161 and arginine 212. Carbamoyl phosphate-binding residues include glycine 251 and proline 252.

It belongs to the aspartate/ornithine carbamoyltransferase superfamily. ATCase family. As to quaternary structure, heterododecamer (2C3:3R2) of six catalytic PyrB chains organized as two trimers (C3), and six regulatory PyrI chains organized as three dimers (R2).

It carries out the reaction carbamoyl phosphate + L-aspartate = N-carbamoyl-L-aspartate + phosphate + H(+). The protein operates within pyrimidine metabolism; UMP biosynthesis via de novo pathway; (S)-dihydroorotate from bicarbonate: step 2/3. In terms of biological role, catalyzes the condensation of carbamoyl phosphate and aspartate to form carbamoyl aspartate and inorganic phosphate, the committed step in the de novo pyrimidine nucleotide biosynthesis pathway. The polypeptide is Aspartate carbamoyltransferase catalytic subunit (Campylobacter jejuni subsp. jejuni serotype O:6 (strain 81116 / NCTC 11828)).